The chain runs to 384 residues: PqqA peptide cyclase (384 aa).

A Radical SAM core domain is found at 14 to 230 (IPAPVGLLAE…EAARERLKGQ (217 aa)). [4Fe-4S] cluster contacts are provided by C28, C32, and C35.

Belongs to the radical SAM superfamily. PqqE family. As to quaternary structure, interacts with PqqD. The interaction is necessary for activity of PqqE. [4Fe-4S] cluster serves as cofactor.

It carries out the reaction [PQQ precursor protein] + S-adenosyl-L-methionine = E-Y cross-linked-[PQQ precursor protein] + 5'-deoxyadenosine + L-methionine + H(+). It participates in cofactor biosynthesis; pyrroloquinoline quinone biosynthesis. Its function is as follows. Catalyzes the cross-linking of a glutamate residue and a tyrosine residue in the PqqA protein as part of the biosynthesis of pyrroloquinoline quinone (PQQ). This Methylorubrum extorquens (strain CM4 / NCIMB 13688) (Methylobacterium extorquens) protein is PqqA peptide cyclase.